Reading from the N-terminus, the 959-residue chain is Lon protease homolog, mitochondrial (959 aa).

The transit peptide at 1–67 (MAASTGYVRL…GPAIGGQWRG (67 aa)) directs the protein to the mitochondrion. Disordered regions lie at residues 77 to 102 (GAFS…GSAG) and 218 to 257 (RQLE…HPAE). Positions 91–102 (EEGAGGAGGSAG) are enriched in gly residues. In terms of domain architecture, Lon N-terminal spans 124–370 (LPLIAITRNP…KALSLLKKEF (247 aa)). The segment covering 233–243 (HKPRRKSKRGK) has biased composition (basic residues). Over residues 244–256 (KEAEDELSARHPA) the composition is skewed to basic and acidic residues. 523–530 (GPPGVGKT) is an ATP binding site. Residues 759 to 949 (VTPPGVVMGL…REIFDIAFPD (191 aa)) form the Lon proteolytic domain. Residues S855 and K898 contribute to the active site.

It belongs to the peptidase S16 family. Homohexamer. Organized in a ring with a central cavity. The ATP-binding and proteolytic domains (AP-domain) form a hexameric chamber, while the N-terminal domain is arranged as a trimer of dimers. DNA and RNA binding is stimulated by substrate and inhibited by ATP binding. Interacts with TWNK and mitochondrial DNA polymerase subunit POLG. Duodenum, heart, lung and liver, but not thymus.

Its subcellular location is the mitochondrion matrix. It carries out the reaction Hydrolysis of proteins in presence of ATP.. Its activity is regulated as follows. Peptidase activity is subject to substrate inhibition by ATP. In terms of biological role, ATP-dependent serine protease that mediates the selective degradation of misfolded, unassembled or oxidatively damaged polypeptides as well as certain short-lived regulatory proteins in the mitochondrial matrix. Endogenous substrates include mitochondrial steroidogenic acute regulatory (StAR) protein, DELE1, helicase Twinkle (TWNK) and the large ribosomal subunit protein MRPL32/bL32m. MRPL32/bL32m is protected from degradation by LONP1 when it is bound to a nucleic acid (RNA), but TWNK is not. May also have a chaperone function in the assembly of inner membrane protein complexes. Participates in the regulation of mitochondrial gene expression and in the maintenance of the integrity of the mitochondrial genome. Binds to mitochondrial promoters and RNA in a single-stranded, site-specific, and strand-specific manner. May regulate mitochondrial DNA replication and/or gene expression using site-specific, single-stranded DNA binding to target the degradation of regulatory proteins binding to adjacent sites in mitochondrial promoters. This Homo sapiens (Human) protein is Lon protease homolog, mitochondrial.